The sequence spans 433 residues: FAD-dependent monooxygenase notI (433 aa).

FAD is bound by residues Glu-45 and Arg-117. Residue Arg-195 is part of the active site. The FAD site is built by Asp-314 and Ala-327.

Belongs to the paxM FAD-dependent monooxygenase family. FAD is required as a cofactor.

The protein operates within alkaloid biosynthesis. Its function is as follows. FAD-dependent monooxygenase; part of the gene cluster that mediates the biosynthesis of notoamide, a fungal indole alkaloid that belongs to a family of natural products containing a characteristic bicyclo[2.2.2]diazaoctane core. The first step of notoamide biosynthesis involves coupling of L-proline and L-tryptophan by the bimodular NRPS notE, to produce cyclo-L-tryptophan-L-proline called brevianamide F. The reverse prenyltransferase notF then acts as a deoxybrevianamide E synthase and converts brevianamide F to deoxybrevianamide E via reverse prenylation at C-2 of the indole ring leading to the bicyclo[2.2.2]diazaoctane core. Deoxybrevianamide E is further hydroxylated at C-6 of the indole ring, likely catalyzed by the cytochrome P450 monooxygenase notG, to yield 6-hydroxy-deoxybrevianamide E. 6-hydroxy-deoxybrevianamide E is a specific substrate of the prenyltransferase notC for normal prenylation at C-7 to produce 6-hydroxy-7-prenyl-deoxybrevianamide, also called notoamide S. As the proposed pivotal branching point in notoamide biosynthesis, notoamide S can be diverted to notoamide E through an oxidative pyran ring closure putatively catalyzed by either notH cytochrome P450 monooxygenase or the notD FAD-linked oxidoreductase. This step would be followed by an indole 2,3-epoxidation-initiated pinacol-like rearrangement catalyzed by the notB FAD-dependent monooxygenase leading to the formation of notoamide C and notoamide D. On the other hand notoamide S is converted to notoamide T by notH (or notD), a bifunctional oxidase that also functions as the intramolecular Diels-Alderase responsible for generation of (+)-notoamide T. To generate antipodal (-)-notoaminide T, notH' (or notD') in Aspergillus versicolor is expected to catalyze a Diels-Alder reaction leading to the opposite stereochemistry. The remaining oxidoreductase notD (or notH) likely catalyzes the oxidative pyran ring formation to yield (+)-stephacidin A. The FAD-dependent monooxygenase notI is highly similar to notB and is predicted to catalyze a similar conversion from (+)-stephacidin A to (-)-notoamide B via the 2,3-epoxidation of (+)-stephacidin A followed by a pinacol-type rearrangement. Finally, it remains unclear which enzyme could be responsible for the final hydroxylation steps leading to notoamide A and sclerotiamide. This is FAD-dependent monooxygenase notI from Aspergillus sp. (strain MF297-2).